Here is a 70-residue protein sequence, read N- to C-terminus: DNA-binding transcriptional activator AlpA (70 aa).

Residues 12-31 (LPAVIQKTGMARATIYDWLN) constitute a DNA-binding region (H-T-H motif).

Positive regulator of the expression of the slpA gene. When overexpressed, leads to suppression of the capsule overproduction and UV sensitivity phenotypes of cells mutant for the Lon ATP-dependent protease. Part of the cryptic P4-like prophage CP4-57. Overexpression of AlpA leads to excision of the CP4-57 prophage by IntA. This inactivates ssrA (the gene upstream of the prophage) that encodes tmRNA which is required to rescue stalled ribosomes in a process known as trans-translation. The polypeptide is DNA-binding transcriptional activator AlpA (Escherichia coli (strain K12)).